A 415-amino-acid chain; its full sequence is Probable cytosolic iron-sulfur protein assembly protein 1 (415 aa).

Residues 9 to 48 (AHDDKVWSLSSHPTLPLLATASTDKCSNIYRLSCSNASSS) form a WD 1 repeat. Residues 45–70 (ASSSSSSSSPPSPPSPPSSSSPRRNF) form a disordered region. Over residues 54–63 (PPSPPSPPSS) the composition is skewed to pro residues. WD repeat units lie at residues 79 to 131 (THRR…DDNT), 160 to 200 (GHEN…EEFE), 207 to 246 (DHTQ…DEWS), 253 to 300 (GHEG…GFNG), 335 to 374 (IHTH…WEVE), and 380 to 415 (AHGV…IWEV).

This sequence belongs to the WD repeat CIA1 family. Interacts with NAR1.

The protein localises to the cytoplasm. Its subcellular location is the nucleus. Essential component of the cytosolic iron-sulfur (Fe/S) protein assembly machinery. Required for the maturation of extramitochondrial Fe/S proteins. This Lodderomyces elongisporus (strain ATCC 11503 / CBS 2605 / JCM 1781 / NBRC 1676 / NRRL YB-4239) (Yeast) protein is Probable cytosolic iron-sulfur protein assembly protein 1.